The chain runs to 129 residues: Glycine cleavage system H protein (129 aa).

Positions 24–106 (SYTVGITEHA…YGEGWFFRVM (83 aa)) constitute a Lipoyl-binding domain. Lys65 is modified (N6-lipoyllysine).

The protein belongs to the GcvH family. In terms of assembly, the glycine cleavage system is composed of four proteins: P, T, L and H. (R)-lipoate serves as cofactor.

In terms of biological role, the glycine cleavage system catalyzes the degradation of glycine. The H protein shuttles the methylamine group of glycine from the P protein to the T protein. This Shewanella oneidensis (strain ATCC 700550 / JCM 31522 / CIP 106686 / LMG 19005 / NCIMB 14063 / MR-1) protein is Glycine cleavage system H protein.